The chain runs to 562 residues: Probable sesquiterpene synthase (562 aa).

The Mg(2+) site is built by Asp-315, Asp-319, and Glu-467. A DDXXD motif motif is present at residues 315–319; the sequence is DDIYD.

This sequence belongs to the terpene synthase family. Tpsa subfamily. The cofactor is Mg(2+). Mn(2+) is required as a cofactor.

In terms of biological role, sesquiterpene synthase. This Santalum murrayanum (Bitter quandong) protein is Probable sesquiterpene synthase (STPS).